Consider the following 548-residue polypeptide: Formyltransferase/hydrolase complex Fhc subunit A (548 aa).

Zn(2+) is bound by residues histidine 57, histidine 59, and histidine 227.

It belongs to the metallo-dependent hydrolases superfamily. FwdA/FmdA family. Octaheteromer. Part of the formyltransferase/hydrolase complex fhc; composed of FhcA, FhcB, FhcC and FhcD. Zn(2+) serves as cofactor.

Its subcellular location is the cytoplasm. The enzyme catalyses N-formylmethanofuran + H2O = methanofuran + formate. Its pathway is one-carbon metabolism; formaldehyde degradation; formate from formaldehyde (H(4)MPT route): step 4/5. In terms of biological role, involved in the transformation of 5-formyl tetrahydromethanopterin (5-formyl-H(4)MPT) to methanofuran (MFR) and formate via the formylmethanofuran (formyl-MFR). May be catalyze the hydrolysis of formylmethanofuran (formyl-MFR) to yield formate and MFR. This chain is Formyltransferase/hydrolase complex Fhc subunit A (fhcA), found in Methylorubrum extorquens (strain ATCC 14718 / DSM 1338 / JCM 2805 / NCIMB 9133 / AM1) (Methylobacterium extorquens).